Consider the following 204-residue polypeptide: TPR repeat-containing protein RHE_CH03534.1 (204 aa).

Residues Met1–Ala29 form the signal peptide. TPR repeat units lie at residues Ile84–Tyr117, Ala118–His151, and Gly153–Asp185.

The polypeptide is TPR repeat-containing protein RHE_CH03534.1 (Rhizobium etli (strain ATCC 51251 / DSM 11541 / JCM 21823 / NBRC 15573 / CFN 42)).